The primary structure comprises 367 residues: Sigma54-dependent transcriptional regulator SfnR (367 aa).

In terms of domain architecture, Sigma-54 factor interaction spans 21-250 (QVFEDPKSQA…LENVIHHTLL (230 aa)). Residues 49–56 (GETGTGKE) and 112–121 (ADGGTLFLDE) each bind ATP.

Its function is as follows. Involved in the dimethyl sulfide degradation pathway. Activates the expression of sfnG and sfnF. The protein is Sigma54-dependent transcriptional regulator SfnR of Pseudomonas fluorescens (strain Pf0-1).